The primary structure comprises 278 residues: Deoxyuridine 5'-triphosphate nucleotidohydrolase (278 aa).

Residues 171 to 173 and 273 to 274 contribute to the substrate site; these read RSG and FG.

It belongs to the dUTPase family. The cofactor is Mg(2+).

It catalyses the reaction dUTP + H2O = dUMP + diphosphate + H(+). Its function is as follows. Involved in nucleotide metabolism: produces dUMP, the immediate precursor of thymidine nucleotides and decreases the intracellular concentration of dUTP to avoid uracil incorporation into viral DNA. This Homo sapiens (Human) protein is Deoxyuridine 5'-triphosphate nucleotidohydrolase.